A 145-amino-acid polypeptide reads, in one-letter code: D-aminoacyl-tRNA deacylase (145 aa).

Residues 137 to 138 carry the Gly-cisPro motif, important for rejection of L-amino acids motif; the sequence is GP.

This sequence belongs to the DTD family. Homodimer.

The protein resides in the cytoplasm. It carries out the reaction glycyl-tRNA(Ala) + H2O = tRNA(Ala) + glycine + H(+). The catalysed reaction is a D-aminoacyl-tRNA + H2O = a tRNA + a D-alpha-amino acid + H(+). Functionally, an aminoacyl-tRNA editing enzyme that deacylates mischarged D-aminoacyl-tRNAs. Also deacylates mischarged glycyl-tRNA(Ala), protecting cells against glycine mischarging by AlaRS. Acts via tRNA-based rather than protein-based catalysis; rejects L-amino acids rather than detecting D-amino acids in the active site. By recycling D-aminoacyl-tRNA to D-amino acids and free tRNA molecules, this enzyme counteracts the toxicity associated with the formation of D-aminoacyl-tRNA entities in vivo and helps enforce protein L-homochirality. The polypeptide is D-aminoacyl-tRNA deacylase (Serratia proteamaculans (strain 568)).